The chain runs to 367 residues: Cystinosin (367 aa).

The N-terminal stretch at 1–22 (MIRNWLTIFILFPLKLVEKCES) is a signal peptide. The Lumenal segment spans residues 23 to 125 (SVSLTVPPVV…LVIRSSAISI (103 aa)). N-linked (GlcNAc...) (high mannose) asparagine glycosylation is found at Asn-36, Asn-41, and Asn-51. Asn-66 carries an N-linked (GlcNAc...) asparagine glycan. 3 N-linked (GlcNAc...) (high mannose) asparagine glycosylation sites follow: Asn-84, Asn-104, and Asn-107. A PQ-loop 1 domain is found at 123-189 (ISIINQVIGW…LLWVPYIKEQ (67 aa)). Residues 126 to 150 (INQVIGWIYFVAWSISFYPQVIMNW) traverse the membrane as a helical segment. At 151-159 (RRKSVIGLS) the chain is on the cytoplasmic side. Residues 160-179 (FDFVALNLTGFVAYSVFNIG) traverse the membrane as a helical segment. Asn-166 contributes to the L-cystine binding site. Over 180 to 202 (LLWVPYIKEQFLLKYPNGVNPVN) the chain is Lumenal. The helical transmembrane segment at 203 to 225 (SNDVFFSLHAVVLTLIIIVQCCL) threads the bilayer. Residue Asp-205 coordinates H(+). Residues 226–234 (YERGGQRVS) are Cytoplasmic-facing. A helical membrane pass occupies residues 235 to 257 (WPAIGFLVLAWLFAFVTMIVAAV). The Lumenal segment spans residues 258-263 (GVTTWL). The PQ-loop 2 domain occupies 263 to 328 (LQFLFCFSYI…QSYNNDQWTL (66 aa)). The helical transmembrane segment at 264–289 (QFLFCFSYIKLAVTLVKYFPQAYMNF) threads the bilayer. Lys-273, Lys-280, and Tyr-281 together coordinate L-cystine. The Cytoplasmic portion of the chain corresponds to 290 to 298 (YYKSTEGWS). Residues 299–308 (IGNVLLDFTG) traverse the membrane as a helical segment. 2 residues coordinate L-cystine: Asn-301 and Asp-305. Position 305 (Asp-305) interacts with H(+). The Lumenal portion of the chain corresponds to 309 to 331 (GSFSLLQMFLQSYNNDQWTLIFG). Residues 332–354 (DPTKFGLGVFSIVFDVVFFIQHF) form a helical membrane-spanning segment. A H(+)-binding site is contributed by Asp-346. The Cytoplasmic segment spans residues 355 to 367 (CLYRKRPGYDQLN). The Lysosomal targeting motif signature appears at 362–366 (GYDQL).

Belongs to the cystinosin family. In terms of assembly, interacts with components of the V-ATPase complex. Interacts with components of the Ragulator complex. Interacts with RRAGA/RagA and RRAGC/RagC. Interacts with AP-3 complex subunit mu (AP3M1 or AP3M2). As to expression, strongly expressed in pancreas, kidney (adult and fetal), skeletal muscle, melanocytes and keratinocytes. Expressed at lower levels in placenta and heart. Weakly expressed in lung, liver and brain (adult and fetal). In terms of tissue distribution, represents 5-20 % of CTNS transcripts, with the exception of the testis that expresses both isoforms in equal proportions.

The protein localises to the lysosome membrane. It is found in the melanosome membrane. It localises to the cell membrane. The enzyme catalyses L-cystine(out) + H(+)(out) = L-cystine(in) + H(+)(in). Its activity is regulated as follows. Switches between a lumen- and a cytosol-open conformation: pH induces conformational changes and shifts the equilibrium to facilitate the transition between the lumen- and cytosol-open conformation, thereby promoting cystine transport. Protonation of specific aspartate residues (Asp-205, Asp-305 and Asp-346) favors the cytosol-open conformation. In terms of biological role, cystine/H(+) symporter that mediates export of cystine, the oxidized dimer of cysteine, from lysosomes. Plays an important role in melanin synthesis by catalyzing cystine export from melanosomes, possibly by inhibiting pheomelanin synthesis. In addition to cystine export, also acts as a positive regulator of mTORC1 signaling in kidney proximal tubular cells, via interactions with components of the v-ATPase and Ragulator complexes. Also involved in small GTPase-regulated vesicle trafficking and lysosomal localization of LAMP2A, independently of cystine transporter activity. This Homo sapiens (Human) protein is Cystinosin.